We begin with the raw amino-acid sequence, 115 residues long: MNRGVCLCLLMAVLAAGALAQPMPHADPTGPRAQQAEEAPRRQLRAVPRVDDEPRAQLGALLARYIQQARKAPSGRMSVIKNLQSLDPSHRISDRDYMGWMDFGRRSAEEFEYTS.

The signal sequence occupies residues 1–20; it reads MNRGVCLCLLMAVLAAGALA. A propeptide spanning residues 21 to 44 is cleaved from the precursor; it reads QPMPHADPTGPRAQQAEEAPRRQL. The segment at 21 to 44 is disordered; sequence QPMPHADPTGPRAQQAEEAPRRQL. At Tyr97 the chain carries Sulfotyrosine. Phe103 carries the phenylalanine amide modification. A propeptide spanning residues 107-115 is cleaved from the precursor; sequence SAEEFEYTS. The residue at position 113 (Tyr113) is a Sulfotyrosine.

It belongs to the gastrin/cholecystokinin family. Binds to CCK-A receptors in the pancreas and CCK-B receptors in the brain. In terms of processing, the precursor is cleaved by proteases to produce a number of active cholecystokinins. Post-translationally, the precursor is cleaved by ACE, which removes the Gly-Arg-Arg peptide at the C-terminus, leading to mature hormone.

It localises to the secreted. Its function is as follows. This peptide hormone induces gall bladder contraction and the release of pancreatic enzymes in the gut. Its function in the brain is not clear. Binding to CCK-A receptors stimulates amylase release from the pancreas, binding to CCK-B receptors stimulates gastric acid secretion. The sequence is that of Cholecystokinin (CCK) from Bos taurus (Bovine).